Reading from the N-terminus, the 193-residue chain is MNKDHEEQLEINEVSQKNKYKSIIESLLFMSGEPINIKDLATILNCKQDKVSSLLNEMKNSYVGKDRGIKILIHNRAVQLVTKPENSIYVEKLLKTNVRQSLSQAALETLSIIAYKQPITRVAIDEIRGVKSDRAIYTLLEKNIIKECGRLDVPGKPILYGTTEEFLKFFGLDSIEAIPNLEDLLKEFSKEEN.

Belongs to the ScpB family. Homodimer. Homodimerization may be required to stabilize the binding of ScpA to the Smc head domains. Component of a cohesin-like complex composed of ScpA, ScpB and the Smc homodimer, in which ScpA and ScpB bind to the head domain of Smc. The presence of the three proteins is required for the association of the complex with DNA.

It localises to the cytoplasm. In terms of biological role, participates in chromosomal partition during cell division. May act via the formation of a condensin-like complex containing Smc and ScpA that pull DNA away from mid-cell into both cell halves. The polypeptide is Segregation and condensation protein B (Clostridium botulinum (strain 657 / Type Ba4)).